The following is a 1196-amino-acid chain: Calcium-activated potassium channel subunit alpha-1 (1196 aa).

Residues 1–52 (MATWNASQIILNSMSNIIESPQSKPRPVMASNGASLFIPVTMEVPCDQGTRM) lie on the Extracellular side of the membrane. The helical transmembrane segment at 53 to 73 (WWAFLASSMVTFFGGLFIILV) threads the bilayer. Residues 74 to 146 (WRTFKYLWTV…MISAQTLTGR (73 aa)) are Cytoplasmic-facing. The helical transmembrane segment at 147-167 (VLVVTVFALSIGALMIYFIDS) threads the bilayer. Topologically, residues 168–182 (SNPIESCQNFYKDFT) are extracellular. The chain crosses the membrane as a helical span at residues 183–203 (LQIDMAFNIFFLLYFGLRFIA). The Cytoplasmic segment spans residues 204–207 (ANDK). The helical transmembrane segment at 208–228 (LWFWLEVNSVVDFFTVPPVFV) threads the bilayer. The Extracellular segment spans residues 229–232 (SVYL). The helical; Voltage-sensor transmembrane segment at 233 to 253 (NRSWLGLRFLRALRLIQFSEI) threads the bilayer. The Cytoplasmic portion of the chain corresponds to 254-268 (LQFLNILKTSNSIKL). Residues 269–289 (VNLCSIFISTWLTAAGFIHLV) traverse the membrane as a helical segment. Topologically, residues 290 to 303 (ENSGDPWRNFENSQ) are extracellular. The pore-forming intramembrane region spans 304–326 (DLSYWECMYLLMVTMSTVGYGDV). Positions 320–323 (TVGY) match the Selectivity for potassium motif. At 327–335 (YAKTTLGRL) the chain is on the extracellular side. The helical transmembrane segment at 336–356 (FMVFFILGGLAMFASYVPEII) threads the bilayer. At 357 to 1196 (ELIGNRKKYG…PPIREVEDEC (840 aa)) the chain is on the cytoplasmic side. An RCK N-terminal 1 domain is found at 375 to 517 (RKHIVVCGHI…WNWKDGDDAI (143 aa)). Mg(2+) is bound by residues Glu-407, Gln-430, and Glu-432. The interval 524–544 (LGFIAQSCLAQGLSTMLANLF) is segment S7. The segment S8 stretch occupies residues 581–601 (LSFPAVCELCFVKLKLLMIAI). Residues 645–649 (CKACH) form a heme-binding motif region. The disordered stretch occupies residues 672 to 697 (SALSPKKKQRNGGMRHSPNTSPNMMR). Residues 748 to 768 (VLSGHVVVCIFGDMTSALIGV) are segment S9. Residues 750–894 (SGHVVVCIFG…MERSSPDNSP (145 aa)) enclose the RCK N-terminal 2 domain. Residues 914–936 (TELVNDSNVQFLDQDDDDDPDTE) carry the Calcium bowl motif. Ca(2+) contacts are provided by Gln-923, Asp-926, Asp-929, and Asp-931. A segment S10 region spans residues 943 to 963 (FACGTAFAVSVLDSLMSATYF). A compositionally biased stretch (low complexity) spans 1098–1119 (ASLSHSSHSSHSSSKKSSSVTS). Positions 1098–1149 (ASLSHSSHSSHSSSKKSSSVTSILHTASANRQNRVKARDSRDKQKMGQAEKK) are disordered. Residues 1120-1129 (ILHTASANRQ) show a composition bias toward polar residues. Residues 1133–1149 (KARDSRDKQKMGQAEKK) show a composition bias toward basic and acidic residues.

The protein belongs to the potassium channel family. Calcium-activated (TC 1.A.1.3) subfamily. KCa1.1/KCNMA1 sub-subfamily. Homotetramer; which constitutes the calcium-activated potassium channel. In terms of tissue distribution, expressed in both the somites and neural tube of 1 day embryos. Within the nervous system, it is restricted to dorsal parts, and expressed centrally in regions dedicated to processing of sensory information. Six hours later, it is expressed segmentally within the somites. At this time, it is expressed in a primary sensory organ, the trigeminal ganglion. By 2 days, it is also expressed in other primary sensory organs, such as the otic vesicle, and the eye. Within the retina, it is expressed to an internal layer. In the developing otic vesicle, it is abundantly expressed near the apical surface. Isoform 3 is neural-specific, and is only expressed during late stages of neuronal differentiation.

It is found in the cell membrane. The catalysed reaction is K(+)(in) = K(+)(out). Ethanol and carbon monoxide-bound heme increase channel activation. Heme inhibits channel activation. Potassium channel activated by both membrane depolarization or increase in cytosolic Ca(2+) that mediates export of K(+). It is also activated by the concentration of cytosolic Mg(2+). Its activation dampens the excitatory events that elevate the cytosolic Ca(2+) concentration and/or depolarize the cell membrane. It therefore contributes to repolarization of the membrane potential. Plays a key role in controlling excitability in a number of systems, such as regulation of the contraction of smooth muscle, the tuning of hair cells in the cochlea, regulation of transmitter release, and innate immunity. In smooth muscles, its activation by high level of Ca(2+), caused by ryanodine receptors in the sarcoplasmic reticulum, regulates the membrane potential. In cochlea cells, its number and kinetic properties partly determine the characteristic frequency of each hair cell and thereby helps to establish a tonotopic map. Highly sensitive to both iberiotoxin (IbTx) and charybdotoxin (CTX). This is Calcium-activated potassium channel subunit alpha-1 (kcnma1) from Xenopus laevis (African clawed frog).